Here is a 703-residue protein sequence, read N- to C-terminus: Subtilisin-like protease SBT4.7 (703 aa).

Residues Met1–Ala19 form the signal peptide. Residues Val20–Gln107 constitute a propeptide, activation peptide. The Inhibitor I9 domain occupies Val29–Leu106. Residues Ser111–Ile556 enclose the Peptidase S8 domain. The active-site Charge relay system is Asp139. Asn170 is a glycosylation site (N-linked (GlcNAc...) asparagine). His194 (charge relay system) is an active-site residue. Residues Asn217, Asn360, Asn416, and Asn433 are each glycosylated (N-linked (GlcNAc...) asparagine). Residues Lys350–Leu411 enclose the PA domain. The Charge relay system role is filled by Ser495. Residues Asn577, Asn615, and Asn633 are each glycosylated (N-linked (GlcNAc...) asparagine).

The protein belongs to the peptidase S8 family. The C-terminal propeptide is autocleaved.

It is found in the secreted. In Arabidopsis thaliana (Mouse-ear cress), this protein is Subtilisin-like protease SBT4.7.